The sequence spans 232 residues: Ribonuclease 3 (232 aa).

The region spanning 10–135 (ALKIYEATGY…LIGAMYMDGG (126 aa)) is the RNase III domain. Glu-48 lines the Mg(2+) pocket. The active site involves Asp-52. Mg(2+)-binding residues include Asn-121 and Glu-124. The active site involves Glu-124. Positions 161–230 (DPKTALQEWV…AKLMLKKITE (70 aa)) constitute a DRBM domain.

It belongs to the ribonuclease III family. Homodimer. Mg(2+) is required as a cofactor.

The protein localises to the cytoplasm. It catalyses the reaction Endonucleolytic cleavage to 5'-phosphomonoester.. Digests double-stranded RNA. Involved in the processing of primary rRNA transcript to yield the immediate precursors to the large and small rRNAs (23S and 16S). Processes some mRNAs, and tRNAs when they are encoded in the rRNA operon. Processes pre-crRNA and tracrRNA of type II CRISPR loci if present in the organism. The chain is Ribonuclease 3 from Anaplasma marginale (strain St. Maries).